The primary structure comprises 824 residues: Acyl-homoserine lactone acylase QuiP (824 aa).

Positions 1-26 are cleaved as a signal peptide; sequence MASPALRHFLPRFGAAAAAASFLSLA. The Nucleophile role is filled by Ser264.

The protein belongs to the peptidase S45 family. In terms of assembly, heterodimer of an alpha subunit and a beta subunit processed from the same precursor.

The protein localises to the periplasm. The enzyme catalyses an N-acyl-L-homoserine lactone + H2O = L-homoserine lactone + a carboxylate. Its function is as follows. Catalyzes the deacylation of acyl-homoserine lactone (AHL or acyl-HSL), releasing homoserine lactone (HSL) and the corresponding fatty acid. Possesses a specificity for the degradation of long-chain acyl-HSLs (side chains of seven or more carbons in length). This is Acyl-homoserine lactone acylase QuiP (quiP) from Pseudomonas syringae pv. syringae (strain B728a).